Consider the following 381-residue polypeptide: Dual specificity protein phosphatase 6 (381 aa).

Residues 30-148 (GNEQLLLMDC…FQAEFALHCE (119 aa)) form the Rhodanese domain. Positions 176-203 (SSSDIESDLDRDPNSATDSDGSPLSNSQ) are disordered. Positions 189–203 (NSATDSDGSPLSNSQ) are enriched in polar residues. Residues 206 to 349 (FPVEILPFLY…LLDFERTLGL (144 aa)) form the Tyrosine-protein phosphatase domain. Residue Cys293 is the Phosphocysteine intermediate of the active site.

The protein belongs to the protein-tyrosine phosphatase family. Non-receptor class dual specificity subfamily. In terms of assembly, interacts with MAPK1/ERK2. In terms of processing, ubiquitinated by the SCF(FBXO31) complex, leading to its proteasomal degradation. Expressed in lung, heart, brain, and kidney, but not significantly in skeletal muscle or testis.

The protein localises to the cytoplasm. The catalysed reaction is O-phospho-L-tyrosyl-[protein] + H2O = L-tyrosyl-[protein] + phosphate. It carries out the reaction O-phospho-L-seryl-[protein] + H2O = L-seryl-[protein] + phosphate. The enzyme catalyses O-phospho-L-threonyl-[protein] + H2O = L-threonyl-[protein] + phosphate. In terms of biological role, dual specificity protein phosphatase, which mediates dephosphorylation and inactivation of MAP kinases. Has a specificity for the ERK family. Implicated in muscle and neuronal differentiation. Plays an important role in alleviating chronic postoperative pain. Necessary for the normal dephosphorylation of the long-lasting phosphorylated forms of spinal MAPK1/3 and MAP kinase p38 induced by peripheral surgery, which drives the resolution of acute postoperative allodynia. Also important for dephosphorylation of MAPK1/3 in local wound tissue, which further contributes to resolution of acute pain. This Rattus norvegicus (Rat) protein is Dual specificity protein phosphatase 6 (Dusp6).